We begin with the raw amino-acid sequence, 482 residues long: 2-succinylbenzoate--CoA ligase (482 aa).

Belongs to the ATP-dependent AMP-binding enzyme family. MenE subfamily.

It carries out the reaction 2-succinylbenzoate + ATP + CoA = 2-succinylbenzoyl-CoA + AMP + diphosphate. It participates in quinol/quinone metabolism; 1,4-dihydroxy-2-naphthoate biosynthesis; 1,4-dihydroxy-2-naphthoate from chorismate: step 5/7. It functions in the pathway quinol/quinone metabolism; menaquinone biosynthesis. In terms of biological role, converts 2-succinylbenzoate (OSB) to 2-succinylbenzoyl-CoA (OSB-CoA). The polypeptide is 2-succinylbenzoate--CoA ligase (Bacillus thuringiensis subsp. konkukian (strain 97-27)).